The following is a 328-amino-acid chain: Reticulocalbin-3 (328 aa).

An N-terminal signal peptide occupies residues 1–20 (MMWRWSFLLLLLLLRHWALG). Residues 24 to 48 (PDAGPHGQDRVHHGTPLSEAPHDDA) form a disordered region. EF-hand domains are found at residues 77-112 (QARL…TQQR), 113-148 (HIRD…HYEP), 163-198 (KMLA…EEFP), 200-235 (MRDI…EEPG), 241-276 (WVQT…PSQD), and 277-312 (QPLV…FVGS). Ca(2+) is bound by residues Asp-92, Asp-94, Trp-96, Glu-101, Asp-126, Asp-128, Asp-130, Arg-132, and Glu-137. A glycan (N-linked (GlcNAc...) asparagine) is linked at Asn-140. Residues Asp-176, Asp-178, Asp-180, Met-182, Glu-187, Asp-213, Asn-215, Asp-217, Tyr-219, Glu-224, Asp-254, Asn-256, Asp-258, Arg-260, Glu-265, Asp-290, Asp-292, Asp-294, Arg-296, and Glu-301 each coordinate Ca(2+). Residues 325-328 (HDEL) carry the Prevents secretion from ER motif.

The protein belongs to the CREC family. In terms of assembly, interacts with PCSK6 (immature form including the propeptide); probably involved in the maturation and the secretion of PCSK6. Post-translationally, degraded by PCSK6 and other endoproteases including FURIN and PCSK5. In terms of processing, N-glycosylated. As to expression, highly expressed in lung and heart. Also detected in liver, spleen, kidney, skeletal muscle, intestine, stomach, and brain.

Its subcellular location is the endoplasmic reticulum lumen. In terms of biological role, probable molecular chaperone assisting protein biosynthesis and transport in the endoplasmic reticulum. Required for the proper biosynthesis and transport of pulmonary surfactant-associated protein A/SP-A, pulmonary surfactant-associated protein D/SP-D and the lipid transporter ABCA3. By regulating both the proper expression and the degradation through the endoplasmic reticulum-associated protein degradation pathway of these proteins plays a crucial role in pulmonary surfactant homeostasis. Has an anti-fibrotic activity by negatively regulating the secretion of type I and type III collagens. This calcium-binding protein also transiently associates with immature PCSK6 and regulates its secretion. This is Reticulocalbin-3 from Mus musculus (Mouse).